The sequence spans 1093 residues: Regulator of nonsense transcripts 1 homolog (1093 aa).

The interval 42–79 (YGVYGGRGPRGNGRRRHDDDDNETEVLDDDDDESLASV) is disordered. The segment covering 61 to 75 (DDNETEVLDDDDDES) has biased composition (acidic residues). A Upf1 CH-rich domain is found at 95-252 (EKELPPHACA…AKLEEMWKEA (158 aa)). Residues cysteine 103, cysteine 106, cysteine 117, cysteine 120, cysteine 125, histidine 135, histidine 139, histidine 145, cysteine 163, cysteine 166, cysteine 189, and cysteine 193 each coordinate Zn(2+). Positions 103–135 (CAYCGIHSPSSVVKCLTCNKWFCSAKGSAFSSH) are C3H. The CC/SHH/C stretch occupies residues 117 to 145 (CLTCNKWFCSAKGSAFSSHIVNHLVRARH). Residues 163–193 (CYNCGTKNVFILGFIPAKSDTVVVLLCRQPC) form a C4 region. Residues glutamine 460, 480-484 (GTGKT), glutamine 650, tyrosine 687, and glutamate 818 contribute to the ATP site.

Belongs to the DNA2/NAM7 helicase family.

It localises to the cytoplasm. The enzyme catalyses ATP + H2O = ADP + phosphate + H(+). Functionally, RNA-dependent helicase required for nonsense-mediated decay (NMD) of aberrant mRNAs containing premature stop codons and modulates the expression level of normal mRNAs. Also capable of unwinding double-stranded DNA and translocating on single-stranded DNA. The polypeptide is Regulator of nonsense transcripts 1 homolog (Neurospora crassa (strain ATCC 24698 / 74-OR23-1A / CBS 708.71 / DSM 1257 / FGSC 987)).